The chain runs to 150 residues: Flagellar assembly factor FliW (150 aa).

It belongs to the FliW family. In terms of assembly, interacts with translational regulator CsrA and flagellin(s).

Its subcellular location is the cytoplasm. Acts as an anti-CsrA protein, binds CsrA and prevents it from repressing translation of its target genes, one of which is flagellin. Binds to flagellin and participates in the assembly of the flagellum. The sequence is that of Flagellar assembly factor FliW from Leptospira borgpetersenii serovar Hardjo-bovis (strain JB197).